The sequence spans 137 residues: MLQPKRTKFRKQMTGHNRGLAQRGSKVSFGEFALKSVARGRLTARQIESARRALTRHVKRGGKIWIRVFPDKPVTKKPLEVRMGKGKGGVEYWVAQIQPGKVLYEIEGVSEELAREAFALAAAKLPLATTFVKRTVM.

Belongs to the universal ribosomal protein uL16 family. Part of the 50S ribosomal subunit.

Functionally, binds 23S rRNA and is also seen to make contacts with the A and possibly P site tRNAs. The chain is Large ribosomal subunit protein uL16 from Ectopseudomonas mendocina (strain ymp) (Pseudomonas mendocina).